The sequence spans 557 residues: Hemolysin transporter protein ShlB (557 aa).

Positions 1-18 are cleaved as a signal peptide; the sequence is MIKKITALTLLVSTALSA. The region spanning 79–152 is the POTRA domain; sequence LPIAGVYLQG…GELGLSVTEG (74 aa).

Belongs to the TPS (TC 1.B.20) family.

Its subcellular location is the cell outer membrane. Interacts with the cell-bound hemolysin. Necessary for the extracellular secretion and activation of hemolysin. In terms of biological role, member of a two partner secretion pathway (TPS) in which it mediates the secretion of hemolysin. This is Hemolysin transporter protein ShlB (shlB) from Serratia marcescens.